Consider the following 66-residue polypeptide: Muscarinic toxin 1 (66 aa).

Intrachain disulfides connect cysteine 3–cysteine 24, cysteine 17–cysteine 42, cysteine 46–cysteine 58, and cysteine 59–cysteine 64.

Belongs to the three-finger toxin family. Short-chain subfamily. Aminergic toxin sub-subfamily. In terms of tissue distribution, expressed by the venom gland.

The protein localises to the secreted. Functionally, shows a non-competitive interaction with adrenergic and muscarinic receptors. Binds to alpha-2b (ADRA2B) (IC(50)=2.3 nM), alpha-1a (ADRA1A), alpha-1b (ADRA1B), and alpha-2c (ADRA2C) adrenergic receptors. Reversibly binds to M1 (CHRM1) muscarinic acetylcholine receptors, probably by interacting with the orthosteric site. Also reveals a slightly weaker effect at M3 (CHRM3) and M4 (CHRM4) receptors. The order of potency is ADRA2B&gt;&gt;CHRM1&gt;ADRA1A&gt;ADRA1B&gt;ADRA2C/CHRM4. The polypeptide is Muscarinic toxin 1 (Dendroaspis angusticeps (Eastern green mamba)).